The following is a 243-amino-acid chain: Probable transcriptional regulatory protein BDU_30 (243 aa).

This sequence belongs to the TACO1 family.

It is found in the cytoplasm. The polypeptide is Probable transcriptional regulatory protein BDU_30 (Borrelia duttonii (strain Ly)).